A 504-amino-acid chain; its full sequence is Histidine--tRNA ligase (504 aa).

It belongs to the class-II aminoacyl-tRNA synthetase family. As to quaternary structure, homodimer.

The protein resides in the cytoplasm. It catalyses the reaction tRNA(His) + L-histidine + ATP = L-histidyl-tRNA(His) + AMP + diphosphate + H(+). The protein is Histidine--tRNA ligase of Rhizobium rhizogenes (strain K84 / ATCC BAA-868) (Agrobacterium radiobacter).